The sequence spans 1220 residues: DNA-directed RNA polymerase subunit beta' (1220 aa).

4 residues coordinate Zn(2+): C61, C63, C76, and C79. Mg(2+) is bound by residues D450, D452, and D454. The interval 1197-1220 (QPESESEEASDIPKLDDVAKTFDN) is disordered. Over residues 1207-1220 (DIPKLDDVAKTFDN) the composition is skewed to basic and acidic residues.

It belongs to the RNA polymerase beta' chain family. As to quaternary structure, the RNAP catalytic core consists of 2 alpha, 1 beta, 1 beta' and 1 omega subunit. When a sigma factor is associated with the core the holoenzyme is formed, which can initiate transcription. The cofactor is Mg(2+). Requires Zn(2+) as cofactor.

It catalyses the reaction RNA(n) + a ribonucleoside 5'-triphosphate = RNA(n+1) + diphosphate. In terms of biological role, DNA-dependent RNA polymerase catalyzes the transcription of DNA into RNA using the four ribonucleoside triphosphates as substrates. The protein is DNA-directed RNA polymerase subunit beta' of Leuconostoc mesenteroides subsp. mesenteroides (strain ATCC 8293 / DSM 20343 / BCRC 11652 / CCM 1803 / JCM 6124 / NCDO 523 / NBRC 100496 / NCIMB 8023 / NCTC 12954 / NRRL B-1118 / 37Y).